Reading from the N-terminus, the 53-residue chain is MFRWGIIFLVIALIAAALGFGGLAGTAAWAAKLVFVVGIVLFLVSLFTGRRRP.

A run of 2 helical transmembrane segments spans residues 4-24 (WGII…GGLA) and 27-47 (AAWA…VSLF).

The protein belongs to the UPF0391 family.

The protein resides in the cell membrane. This is UPF0391 membrane protein Ent638_0536 from Enterobacter sp. (strain 638).